Reading from the N-terminus, the 21-residue chain is Large ribosomal subunit protein uL10 (21 aa).

This sequence belongs to the universal ribosomal protein uL10 family. Part of the ribosomal stalk of the 50S ribosomal subunit. The N-terminus interacts with L11 and the large rRNA to form the base of the stalk. The C-terminus forms an elongated spine to which L12 dimers bind in a sequential fashion forming a multimeric L10(L12)X complex.

Forms part of the ribosomal stalk, playing a central role in the interaction of the ribosome with GTP-bound translation factors. The chain is Large ribosomal subunit protein uL10 (rplJ) from Bacillus cereus.